The primary structure comprises 232 residues: Enolase-phosphatase E1 (232 aa).

Belongs to the HAD-like hydrolase superfamily. MasA/MtnC family. Monomer. Requires Mg(2+) as cofactor.

It carries out the reaction 5-methylsulfanyl-2,3-dioxopentyl phosphate + H2O = 1,2-dihydroxy-5-(methylsulfanyl)pent-1-en-3-one + phosphate. Its pathway is amino-acid biosynthesis; L-methionine biosynthesis via salvage pathway; L-methionine from S-methyl-5-thio-alpha-D-ribose 1-phosphate: step 3/6. It participates in amino-acid biosynthesis; L-methionine biosynthesis via salvage pathway; L-methionine from S-methyl-5-thio-alpha-D-ribose 1-phosphate: step 4/6. In terms of biological role, bifunctional enzyme that catalyzes the enolization of 2,3-diketo-5-methylthiopentyl-1-phosphate (DK-MTP-1-P) into the intermediate 2-hydroxy-3-keto-5-methylthiopentenyl-1-phosphate (HK-MTPenyl-1-P), which is then dephosphorylated to form the acireductone 1,2-dihydroxy-3-keto-5-methylthiopentene (DHK-MTPene). In Xanthomonas oryzae pv. oryzae (strain KACC10331 / KXO85), this protein is Enolase-phosphatase E1.